Reading from the N-terminus, the 238-residue chain is Ribonuclease 3 (238 aa).

Residues 17-140 (YATLEKALGY…LMAGVYLEAG (124 aa)) form the RNase III domain. E53 lines the Mg(2+) pocket. The active site involves D57. Mg(2+) contacts are provided by S126 and E129. Residue E129 is part of the active site. Residues 167 to 236 (DYKTALQELT…AYQALQKLKE (70 aa)) enclose the DRBM domain.

This sequence belongs to the ribonuclease III family. In terms of assembly, homodimer. It depends on Mg(2+) as a cofactor.

Its subcellular location is the cytoplasm. It catalyses the reaction Endonucleolytic cleavage to 5'-phosphomonoester.. Functionally, digests double-stranded RNA. Involved in the processing of primary rRNA transcript to yield the immediate precursors to the large and small rRNAs (23S and 16S). Processes some mRNAs, and tRNAs when they are encoded in the rRNA operon. Processes pre-crRNA and tracrRNA of type II CRISPR loci if present in the organism. This chain is Ribonuclease 3, found in Helicobacter pylori (strain Shi470).